Reading from the N-terminus, the 555-residue chain is La-related protein 7 (555 aa).

The HTH La-type RNA-binding domain maps to 36–127; that stretch reads RSRVKQLLSD…RRKEPLGETP (92 aa). One can recognise an RRM domain in the interval 133–211; that stretch reads RTVYVELLPK…PRKPGIFPKT (79 aa). Positions 218–327 are disordered; it reads PFDAVTQDND…ENKDEELNSL (110 aa). 3 stretches are compositionally biased toward polar residues: residues 238 to 251, 258 to 274, and 284 to 293; these read KNSTSEETGSNNMD, STVTSEPNLATLTSTVS, and SQSFEASSGE. A coiled-coil region spans residues 295 to 356; the sequence is QFEMSSKMRK…ERLKVGEEVI (62 aa). Over residues 303-327 the composition is skewed to basic and acidic residues; the sequence is RKVEEEKSELKDLSSENKDEELNSL. Residues 425–538 form the xRRM domain; the sequence is EFLSGVIVKI…TEKLISKAEK (114 aa).

The protein belongs to the LARP7 family. As to quaternary structure, core component of the 7SK RNP complex. Associates with box C/D small nucleolar ribonucleoprotein (snoRNP) complexes.

The protein resides in the nucleus. It is found in the nucleoplasm. Its function is as follows. RNA-binding protein that specifically binds distinct small nuclear RNA (snRNAs) and regulates their processing and function. Specifically binds the 7SK snRNA (7SK RNA) and acts as a core component of the 7SK ribonucleoprotein (RNP) complex, thereby acting as a negative regulator of transcription elongation by RNA polymerase II. The 7SK RNP complex sequesters the positive transcription elongation factor b (P-TEFb) in a large inactive 7SK RNP complex preventing RNA polymerase II phosphorylation and subsequent transcriptional elongation. The 7SK RNP complex also promotes snRNA gene transcription by RNA polymerase II via interaction with the little elongation complex (LEC). LARP7 specifically binds to the highly conserved 3'-terminal U-rich stretch of 7SK RNA; on stimulation, remains associated with 7SK RNA, whereas P-TEFb is released from the complex. LARP7 also acts as a regulator of mRNA splicing fidelity by promoting U6 snRNA processing. Specifically binds U6 snRNAs and associates with a subset of box C/D RNP complexes: promotes U6 snRNA 2'-O-methylation by facilitating U6 snRNA loading into box C/D RNP complexes. U6 snRNA 2'-O-methylation is required for mRNA splicing fidelity. The polypeptide is La-related protein 7 (Danio rerio (Zebrafish)).